Reading from the N-terminus, the 283-residue chain is Phytanoyl-CoA dioxygenase (283 aa).

Residues Lys-99, Met-138, 153–155, and Trp-170 contribute to the 2-oxoglutarate site; that span reads HQD. Fe cation-binding residues include His-153 and Asp-155. Fe cation is bound at residue His-238. Residues Ser-240 and Arg-249 each coordinate 2-oxoglutarate.

Belongs to the PhyH family. Fe cation is required as a cofactor. It depends on L-ascorbate as a cofactor.

The catalysed reaction is phytanoyl-CoA + 2-oxoglutarate + O2 = 2-hydroxyphytanoyl-CoA + succinate + CO2. The protein operates within lipid metabolism; fatty acid metabolism. Functionally, converts phytanoyl-CoA to 2-hydroxyphytanoyl-CoA. The sequence is that of Phytanoyl-CoA dioxygenase from Arabidopsis thaliana (Mouse-ear cress).